A 411-amino-acid chain; its full sequence is MQTSEREGSGPELSPSVMPEAPLESPPFPTKSPAFDLFNLVLSYKRLEIYLEPLKDAGDGVRYLLRWQMPLCSLLTCLGLNVLFLTLNEGAWYSVGALMISVPALLGYLQEVCRARLPESELMRRKYHSVRQEDLQRVRLSRPEAVAEVKSFLIQLEAFLSRLCCTCEAAYRVLHWENPVVSSQFYGALLGTICMLYLLPLCWVLTLLNSTLFLGNVEFFRVVSEYRASLQQRMNPKQEEHAFESPPPPDVGGKGGLMDSTPALTPTEDLTPGSVEEAEEAEPDEEFKDAIEETHLVVLEDDEGAPCPAEDELALQDNGFLSKNEVLRSKVSRLTERLRKRYPTNNFGNCTGCSATFSVLKKRRSCSNCGNSFCSRCCSFKVPKSSMGATAPEAQRETVFVCASCNQTLSK.

The tract at residues 1–27 (MQTSEREGSGPELSPSVMPEAPLESPP) is disordered. The Cytoplasmic segment spans residues 1–66 (MQTSEREGSG…AGDGVRYLLR (66 aa)). The sufficient for homooligomerization stretch occupies residues 1–92 (MQTSEREGSG…LFLTLNEGAW (92 aa)). The segment at 1-205 (MQTSEREGSG…LYLLPLCWVL (205 aa)) is sufficient for localization to endoplasmic reticulum tubular network and for interactions with REEP1, REEP5, ATL1, ATL2, ATL3 and SPAST. The necessary for interaction with RAB11A and function in neurite outgrowth stretch occupies residues 51–64 (LEPLKDAGDGVRYL). The helical transmembrane segment at 67–87 (WQMPLCSLLTCLGLNVLFLTL) threads the bilayer. Residue asparagine 88 is a topological domain, lumenal. The chain crosses the membrane as a helical span at residues 89–109 (EGAWYSVGALMISVPALLGYL). At 110-187 (QEVCRARLPE…NPVVSSQFYG (78 aa)) the chain is on the cytoplasmic side. An intramembrane region (helical) is located at residues 188–208 (ALLGTICMLYLLPLCWVLTLL). Over 209-411 (NSTLFLGNVE…CASCNQTLSK (203 aa)) the chain is Cytoplasmic. A disordered region spans residues 234–286 (MNPKQEEHAFESPPPPDVGGKGGLMDSTPALTPTEDLTPGSVEEAEEAEPDEE). The necessary for interaction with KIF5A stretch occupies residues 271–361 (TPGSVEEAEE…GCSATFSVLK (91 aa)). Acidic residues predominate over residues 276-286 (EEAEEAEPDEE). Residues 286-292 (EFKDAIE) form a necessary for interaction with VAPA region. The FYVE-type zinc-finger motif lies at 344-410 (TNNFGNCTGC…VCASCNQTLS (67 aa)). Residues cysteine 350, cysteine 353, cysteine 366, cysteine 369, cysteine 374, cysteine 377, cysteine 402, and cysteine 405 each coordinate Zn(2+).

As to quaternary structure, can form homooligomers (monomers, dimers and tetramers). Interacts with RAB11A (GDP-bound form); regulates RAB11A. Interacts with FKBP8; may negatively regulate ZFYVE27 phosphorylation. Interacts with VAPA (via MSP domain); may regulate ZFYVE27 retention in the endoplasmic reticulum and its function in cell projections formation. Interacts with VAPB (via MSP domain). Interacts with RAB11B (GDP-bound form), REEP1, REEP5, ATL1, ATL2, ATL3, SPAST, SURF4, KIF5A, KIF5B, KIF5C and RTN3. In terms of processing, phosphorylated. Phosphorylation is induced by NGF through the MAPK/ERK pathway and modulates interaction with RAB11A.

It localises to the recycling endosome membrane. The protein resides in the endoplasmic reticulum membrane. The protein localises to the cell projection. Its subcellular location is the growth cone membrane. In terms of biological role, key regulator of RAB11-dependent vesicular trafficking during neurite extension through polarized membrane transport. Promotes axonal elongation and contributes to the establishment of neuronal cell polarity. Involved in nerve growth factor-induced neurite formation in VAPA-dependent manner. Contributes to both the formation and stabilization of the tubular ER network. Involved in ER morphogenesis by regulating the sheet-to-tubule balance and possibly the density of tubule interconnections. Acts as an adapter protein that facilitates the interaction of KIF5A with VAPA, VAPB, SURF4, RAB11A, RAB11B and RTN3 and the ZFYVE27-KIF5A complex contributes to the transport of these proteins in neurons. Can induce formation of neurite-like membrane protrusions in non-neuronal cells in a KIF5A/B-dependent manner. The chain is Protrudin (ZFYVE27) from Pongo abelii (Sumatran orangutan).